The primary structure comprises 373 residues: Probable tRNA sulfurtransferase (373 aa).

A THUMP domain is found at 54–158 (NKNIEELSKV…NDVAYFYHKI (105 aa)). ATP is bound by residues 176–177 (LF), 201–202 (NF), Lys256, Gly278, and Gln287.

The protein belongs to the ThiI family.

It is found in the cytoplasm. The enzyme catalyses [ThiI sulfur-carrier protein]-S-sulfanyl-L-cysteine + a uridine in tRNA + 2 reduced [2Fe-2S]-[ferredoxin] + ATP + H(+) = [ThiI sulfur-carrier protein]-L-cysteine + a 4-thiouridine in tRNA + 2 oxidized [2Fe-2S]-[ferredoxin] + AMP + diphosphate. It catalyses the reaction [ThiS sulfur-carrier protein]-C-terminal Gly-Gly-AMP + S-sulfanyl-L-cysteinyl-[cysteine desulfurase] + AH2 = [ThiS sulfur-carrier protein]-C-terminal-Gly-aminoethanethioate + L-cysteinyl-[cysteine desulfurase] + A + AMP + 2 H(+). It functions in the pathway cofactor biosynthesis; thiamine diphosphate biosynthesis. Catalyzes the ATP-dependent transfer of a sulfur to tRNA to produce 4-thiouridine in position 8 of tRNAs, which functions as a near-UV photosensor. Also catalyzes the transfer of sulfur to the sulfur carrier protein ThiS, forming ThiS-thiocarboxylate. This is a step in the synthesis of thiazole, in the thiamine biosynthesis pathway. The sulfur is donated as persulfide by IscS. This Saccharolobus islandicus (strain M.16.27) (Sulfolobus islandicus) protein is Probable tRNA sulfurtransferase.